A 1946-amino-acid polypeptide reads, in one-letter code: 1,3-beta-glucan synthase component (1946 aa).

Disordered stretches follow at residues 1–127 (MSGY…FSDF) and 152–198 (YGEG…KEPY). 3 stretches are compositionally biased toward low complexity: residues 24 to 34 (GYYQDDQYYDQ), 43 to 60 (GDHA…QGDG), and 91 to 109 (DDYY…NQGY). Over residues 165–180 (QLSYGGNRSSGASTPN) the composition is skewed to polar residues. N-linked (GlcNAc...) asparagine glycosylation is found at asparagine 171 and asparagine 290. Residues 297 to 316 (KRKAKKGKKKGGEAGNEAET) form a disordered region. Transmembrane regions (helical) follow at residues 489–509 (WFHL…MFWF), 537–557 (FSIV…ATLA), 576–596 (LLFL…VFMF), 618–638 (IGIV…VMPL), 675–695 (FGLW…YLTL), and 734–754 (IVLI…TYLF). N-linked (GlcNAc...) asparagine glycans are attached at residues asparagine 1017 and asparagine 1312. The next 5 helical transmembrane spans lie at 1356–1376 (NMFI…IGAL), 1413–1433 (CIIS…VQEL), 1500–1520 (FAGQ…FATS), 1523–1543 (WQPA…SPFL), and 1615–1635 (IFLT…VAYL). A glycan (N-linked (GlcNAc...) asparagine) is linked at asparagine 1649. 5 helical membrane passes run 1667-1687 (LAVV…AMFG), 1703-1723 (FGPV…IIFF), 1738-1758 (LAGI…IVSL), 1803-1823 (FSAD…LILI), and 1864-1884 (AILY…PGVI). Asparagine 1918 is a glycosylation site (N-linked (GlcNAc...) asparagine). The segment at 1920–1946 (TEGKTETGTKAGGADASATDASKLRLF) is disordered. Residues 1925-1940 (ETGTKAGGADASATDA) are compositionally biased toward low complexity.

Belongs to the glycosyltransferase 48 family. In terms of assembly, component of the 1,3-beta-glucan synthase (GS) complex composed of a catalytic subunit GLS1 and a regulatory subunit RHO1.

It localises to the membrane. It is found in the cell membrane. It catalyses the reaction [(1-&gt;3)-beta-D-glucosyl](n) + UDP-alpha-D-glucose = [(1-&gt;3)-beta-D-glucosyl](n+1) + UDP + H(+). With respect to regulation, activated by iron ions. Inhibited by manganese, copper and zinc ions. Catalytic subunit of the 1,3-beta-glucan synthase (GS). Synthesizes 1,3-beta-glucan, a major structural component of the fungal cell wall. Involved in cell wall synthesis, maintenance and remodeling. The protein is 1,3-beta-glucan synthase component of Cordyceps militaris (strain CM01) (Caterpillar fungus).